The chain runs to 201 residues: 3-isopropylmalate dehydratase small subunit (201 aa).

This sequence belongs to the LeuD family. LeuD type 1 subfamily. In terms of assembly, heterodimer of LeuC and LeuD.

It catalyses the reaction (2R,3S)-3-isopropylmalate = (2S)-2-isopropylmalate. It participates in amino-acid biosynthesis; L-leucine biosynthesis; L-leucine from 3-methyl-2-oxobutanoate: step 2/4. Functionally, catalyzes the isomerization between 2-isopropylmalate and 3-isopropylmalate, via the formation of 2-isopropylmaleate. This Klebsiella pneumoniae (strain 342) protein is 3-isopropylmalate dehydratase small subunit.